We begin with the raw amino-acid sequence, 231 residues long: MYDIKAWQHVFKLDPAKEISDNDLDALCMSDTDAIMIGGTDNVTEDNVIHLMSRVRRYPLPLVLEISNIESIIPGFDFYFVPTVLNSQDTTYHNGMMHKALKQFGFMVNFDEVVLEGYLVLNPDSKVAKLTQSNTNIDIEDVEAYAQMVNEMYKLPLMYLEYSGQYGDVEKVEAASRLLTNTQLFYGGGITSIEQAREMAQYADTIVVGNIIYDDIKKAIKTVKIKKESNK.

A sn-glycerol 1-phosphate-binding site is contributed by Lys12. Residues Asp14 and Thr40 each coordinate Mg(2+). Sn-glycerol 1-phosphate is bound by residues 159 to 164, Gly189, and 209 to 210; these read YLEYSG and GN.

Belongs to the GGGP/HepGP synthase family. Group I subfamily. Homodimer. Mg(2+) is required as a cofactor.

It catalyses the reaction sn-glycerol 1-phosphate + all-trans-heptaprenyl diphosphate = 3-heptaprenyl-sn-glycero-1-phosphate + diphosphate. It functions in the pathway membrane lipid metabolism; glycerophospholipid metabolism. Its function is as follows. Prenyltransferase that catalyzes in vivo the transfer of the heptaprenyl moiety of heptaprenyl pyrophosphate (HepPP; 35 carbon atoms) to the C3 hydroxyl of sn-glycerol-1-phosphate (G1P), producing heptaprenylglyceryl phosphate (HepGP). This reaction is an ether-bond-formation step in the biosynthesis of archaea-type G1P-based membrane lipids found in Bacillales. This chain is Heptaprenylglyceryl phosphate synthase, found in Staphylococcus haemolyticus (strain JCSC1435).